Reading from the N-terminus, the 315-residue chain is Cysteine proteinase 1 (315 aa).

An N-terminal signal peptide occupies residues 1–13 (MFTFILMFYIGYG). The propeptide at 14–93 (IDFNTWVANN…KGEVRYLNIQ (80 aa)) is activation peptide. 2 disulfides stabilise this stretch: Cys-115-Cys-161 and Cys-152-Cys-193. Cys-118 is a catalytic residue. Residues His-259 and Asn-279 contribute to the active site.

The protein belongs to the peptidase C1 family.

The protein resides in the lysosome. With respect to regulation, inhibited by cysteine protease inhibitors ICP1 and ICP2. Functionally, cysteine protease which degrades matrix proteins such as collagen, laminin and fibronectin and thus is involved in the destruction of human tissue. Can abolish adhesion. May play an important role in pathogenicity. This chain is Cysteine proteinase 1, found in Entamoeba histolytica (strain ATCC 30459 / HM-1:IMSS / ABRM).